Consider the following 838-residue polypeptide: Translation initiation factor IF-2 (838 aa).

Residues 1–235 (MSDTDGKKPL…RSLAAMKREQ (235 aa)) are disordered. Residues 18-27 (SGQVKQSFSH) are compositionally biased toward polar residues. Positions 50 to 60 (SGSSTTTSSPS) are enriched in low complexity. The span at 88-156 (KLREVDDAKR…AARRAEEAKR (69 aa)) shows a compositional bias: basic and acidic residues. The segment covering 162–177 (PAAAQPDAADSRASAP) has biased composition (low complexity). Residues 187–208 (SRKEREREADRDRTTKKDDSRR) are compositionally biased toward basic and acidic residues. A tr-type G domain is found at 335–509 (PRPPIITIMG…ELLDLRANPK (175 aa)). The interval 344–351 (GHVDHGKT) is G1. 344 to 351 (GHVDHGKT) contributes to the GTP binding site. Positions 369 to 373 (GITQH) are G2. Positions 391 to 394 (DTPG) are G3. GTP contacts are provided by residues 391–395 (DTPGH) and 445–448 (NKID). The segment at 445–448 (NKID) is G4. The tract at residues 481–483 (SAK) is G5.

It belongs to the TRAFAC class translation factor GTPase superfamily. Classic translation factor GTPase family. IF-2 subfamily.

It is found in the cytoplasm. In terms of biological role, one of the essential components for the initiation of protein synthesis. Protects formylmethionyl-tRNA from spontaneous hydrolysis and promotes its binding to the 30S ribosomal subunits. Also involved in the hydrolysis of GTP during the formation of the 70S ribosomal complex. This Cereibacter sphaeroides (strain ATCC 17025 / ATH 2.4.3) (Rhodobacter sphaeroides) protein is Translation initiation factor IF-2.